The primary structure comprises 91 residues: Ragulator complex protein LAMTOR5 homolog (91 aa).

Belongs to the LAMTOR5 family. As to quaternary structure, part of the Ragulator complex.

The protein localises to the cytoplasm. It is found in the lysosome. Its function is as follows. Regulator of the TOR pathway, a signaling cascade that promotes cell growth in response to growth factors, energy levels, and amino acids. As part of the Ragulator complex, may activate the TOR signaling cascade in response to amino acids. This chain is Ragulator complex protein LAMTOR5 homolog, found in Ixodes scapularis (Black-legged tick).